We begin with the raw amino-acid sequence, 208 residues long: Small ribosomal subunit protein uS4 (208 aa).

Residues 98–158 enclose the S4 RNA-binding domain; that stretch reads SRLDNAVYRL…EKSRNMQVID (61 aa).

This sequence belongs to the universal ribosomal protein uS4 family. In terms of assembly, part of the 30S ribosomal subunit. Contacts protein S5. The interaction surface between S4 and S5 is involved in control of translational fidelity.

Functionally, one of the primary rRNA binding proteins, it binds directly to 16S rRNA where it nucleates assembly of the body of the 30S subunit. With S5 and S12 plays an important role in translational accuracy. The sequence is that of Small ribosomal subunit protein uS4 from Desulfosudis oleivorans (strain DSM 6200 / JCM 39069 / Hxd3) (Desulfococcus oleovorans).